The following is a 309-amino-acid chain: Aspartate carbamoyltransferase catalytic subunit (309 aa).

Carbamoyl phosphate-binding residues include arginine 58 and threonine 59. Position 86 (lysine 86) interacts with L-aspartate. The carbamoyl phosphate site is built by arginine 108, histidine 136, and glutamine 139. Arginine 169 and arginine 223 together coordinate L-aspartate. Residues glycine 265 and proline 266 each contribute to the carbamoyl phosphate site.

The protein belongs to the aspartate/ornithine carbamoyltransferase superfamily. ATCase family. In terms of assembly, heterododecamer (2C3:3R2) of six catalytic PyrB chains organized as two trimers (C3), and six regulatory PyrI chains organized as three dimers (R2).

It carries out the reaction carbamoyl phosphate + L-aspartate = N-carbamoyl-L-aspartate + phosphate + H(+). It participates in pyrimidine metabolism; UMP biosynthesis via de novo pathway; (S)-dihydroorotate from bicarbonate: step 2/3. In terms of biological role, catalyzes the condensation of carbamoyl phosphate and aspartate to form carbamoyl aspartate and inorganic phosphate, the committed step in the de novo pyrimidine nucleotide biosynthesis pathway. This Akkermansia muciniphila (strain ATCC BAA-835 / DSM 22959 / JCM 33894 / BCRC 81048 / CCUG 64013 / CIP 107961 / Muc) protein is Aspartate carbamoyltransferase catalytic subunit.